A 431-amino-acid polypeptide reads, in one-letter code: Salivary plasminogen activator beta (431 aa).

Residues 1–36 (MVNTMKTKLLCVLLLCGAVFSLPRQETYRQLARGSR) form the signal peptide. An EGF-like domain is found at 37–75 (AYGGCSELRCFNGGTCWQAASFSDFVCQCPKGYTGKQCE). Cystine bridges form between C41/C52, C46/C63, C65/C74, C82/C163, C103/C145, C134/C158, C168/C299, C211/C227, C219/C288, C313/C388, C345/C361, and C378/C406. A Kringle domain is found at 82 to 163 (CYKDQGVTYR…ILEFCSVPVC (82 aa)). N139 carries an N-linked (GlcNAc...) asparagine glycan. One can recognise a Peptidase S1 domain in the interval 180-430 (STGGLFTDIT…YLGWIRDNMR (251 aa)). Catalysis depends on charge relay system residues H226 and D275. N-linked (GlcNAc...) asparagine glycosylation is present at N352. S382 (charge relay system) is an active-site residue.

This sequence belongs to the peptidase S1 family. In terms of assembly, monomer.

It is found in the secreted. It catalyses the reaction Specific cleavage of Arg-|-Val bond in plasminogen to form plasmin.. In terms of biological role, probably essential to support the feeding habits of this exclusively haematophagous animal. Probable potent thrombolytic agent. This Desmodus rotundus (Vampire bat) protein is Salivary plasminogen activator beta.